A 239-amino-acid polypeptide reads, in one-letter code: 1-(5-phosphoribosyl)-5-[(5-phosphoribosylamino)methylideneamino] imidazole-4-carboxamide isomerase (239 aa).

Residue aspartate 8 is the Proton acceptor of the active site. The Proton donor role is filled by aspartate 129.

It belongs to the HisA/HisF family.

It is found in the cytoplasm. It catalyses the reaction 1-(5-phospho-beta-D-ribosyl)-5-[(5-phospho-beta-D-ribosylamino)methylideneamino]imidazole-4-carboxamide = 5-[(5-phospho-1-deoxy-D-ribulos-1-ylimino)methylamino]-1-(5-phospho-beta-D-ribosyl)imidazole-4-carboxamide. It participates in amino-acid biosynthesis; L-histidine biosynthesis; L-histidine from 5-phospho-alpha-D-ribose 1-diphosphate: step 4/9. In Bacillus thuringiensis subsp. konkukian (strain 97-27), this protein is 1-(5-phosphoribosyl)-5-[(5-phosphoribosylamino)methylideneamino] imidazole-4-carboxamide isomerase.